Here is an 82-residue protein sequence, read N- to C-terminus: Translational regulator CsrA (82 aa).

Belongs to the CsrA/RsmA family. Homodimer; the beta-strands of each monomer intercalate to form a hydrophobic core, while the alpha-helices form wings that extend away from the core.

It is found in the cytoplasm. In terms of biological role, a translational regulator that binds mRNA to regulate translation initiation and/or mRNA stability. Usually binds in the 5'-UTR at or near the Shine-Dalgarno sequence preventing ribosome-binding, thus repressing translation. Its main target seems to be the major flagellin gene, while its function is anatagonized by FliW. In Geobacillus kaustophilus (strain HTA426), this protein is Translational regulator CsrA.